An 89-amino-acid chain; its full sequence is Small ribosomal subunit protein uS14 (89 aa).

Belongs to the universal ribosomal protein uS14 family. In terms of assembly, part of the 30S ribosomal subunit. Contacts proteins S3 and S10.

Its function is as follows. Binds 16S rRNA, required for the assembly of 30S particles and may also be responsible for determining the conformation of the 16S rRNA at the A site. This is Small ribosomal subunit protein uS14 from Latilactobacillus sakei subsp. sakei (strain 23K) (Lactobacillus sakei subsp. sakei).